The chain runs to 73 residues: Translation initiation factor IF-1 (73 aa).

The S1-like domain occupies 1–73 (MAKKEGALEL…TRGRIVYRHK (73 aa)).

Belongs to the IF-1 family. Component of the 30S ribosomal translation pre-initiation complex which assembles on the 30S ribosome in the order IF-2 and IF-3, IF-1 and N-formylmethionyl-tRNA(fMet); mRNA recruitment can occur at any time during PIC assembly.

It localises to the cytoplasm. One of the essential components for the initiation of protein synthesis. Stabilizes the binding of IF-2 and IF-3 on the 30S subunit to which N-formylmethionyl-tRNA(fMet) subsequently binds. Helps modulate mRNA selection, yielding the 30S pre-initiation complex (PIC). Upon addition of the 50S ribosomal subunit IF-1, IF-2 and IF-3 are released leaving the mature 70S translation initiation complex. This chain is Translation initiation factor IF-1, found in Cutibacterium acnes (strain DSM 16379 / KPA171202) (Propionibacterium acnes).